The following is a 257-amino-acid chain: Acetylglutamate kinase (257 aa).

Substrate-binding positions include G43–G44, R65, and N157. ATP contacts are provided by residues D180–L185 and I208–T210.

Belongs to the acetylglutamate kinase family. ArgB subfamily. Homodimer.

It localises to the cytoplasm. The catalysed reaction is N-acetyl-L-glutamate + ATP = N-acetyl-L-glutamyl 5-phosphate + ADP. The protein operates within amino-acid biosynthesis; L-arginine biosynthesis; N(2)-acetyl-L-ornithine from L-glutamate: step 2/4. In terms of biological role, catalyzes the ATP-dependent phosphorylation of N-acetyl-L-glutamate. This chain is Acetylglutamate kinase, found in Pectobacterium atrosepticum (strain SCRI 1043 / ATCC BAA-672) (Erwinia carotovora subsp. atroseptica).